The chain runs to 363 residues: 3-dehydroquinate synthase (363 aa).

NAD(+)-binding positions include 107 to 111, 131 to 132, Lys-144, and Lys-153; these read GVIGD and TT. Residues Glu-186, His-251, and His-268 each coordinate Zn(2+).

This sequence belongs to the sugar phosphate cyclases superfamily. Dehydroquinate synthase family. Co(2+) is required as a cofactor. Requires Zn(2+) as cofactor. NAD(+) serves as cofactor.

It localises to the cytoplasm. It catalyses the reaction 7-phospho-2-dehydro-3-deoxy-D-arabino-heptonate = 3-dehydroquinate + phosphate. The protein operates within metabolic intermediate biosynthesis; chorismate biosynthesis; chorismate from D-erythrose 4-phosphate and phosphoenolpyruvate: step 2/7. Functionally, catalyzes the conversion of 3-deoxy-D-arabino-heptulosonate 7-phosphate (DAHP) to dehydroquinate (DHQ). The chain is 3-dehydroquinate synthase from Nostoc punctiforme (strain ATCC 29133 / PCC 73102).